A 208-amino-acid polypeptide reads, in one-letter code: Probable acyl-homoserine-lactone synthase (208 aa).

Belongs to the autoinducer synthase family.

It carries out the reaction a fatty acyl-[ACP] + S-adenosyl-L-methionine = an N-acyl-L-homoserine lactone + S-methyl-5'-thioadenosine + holo-[ACP] + H(+). Required for the synthesis of OHHL (N-(3-oxooctanoyl)-L-homoserine lactone), an autoinducer molecule which binds to TraR and thus acts in the control of conjugal transfer. The chain is Probable acyl-homoserine-lactone synthase (traI) from Sinorhizobium fredii (strain NBRC 101917 / NGR234).